The primary structure comprises 389 residues: Probable DNA double-strand break repair nuclease NurA (389 aa).

Mn(2+) contacts are provided by aspartate 74 and aspartate 151.

The protein belongs to the NurA family. Mn(2+) serves as cofactor.

Involved in DNA double-strand break (DSB) repair. Probably acts with HerA to stimulate resection of the 5' strand and produce the long 3' single-strand that is required for RadA loading. The polypeptide is Probable DNA double-strand break repair nuclease NurA (Methanocaldococcus jannaschii (strain ATCC 43067 / DSM 2661 / JAL-1 / JCM 10045 / NBRC 100440) (Methanococcus jannaschii)).